The sequence spans 667 residues: Mediator of RNA polymerase II transcription subunit 17 (667 aa).

Residues 172 to 197 are a coiled coil; sequence KRRALQEAVQVLDMAQKQRQRASSNL.

It belongs to the Mediator complex subunit 17 family. As to quaternary structure, component of the Mediator complex.

It localises to the nucleus. Its function is as follows. Component of the Mediator complex, a coactivator involved in regulated gene transcription of nearly all RNA polymerase II-dependent genes. Mediator functions as a bridge to convey information from gene-specific regulatory proteins to the basal RNA polymerase II transcription machinery. Mediator is recruited to promoters by direct interactions with regulatory proteins and serves as a scaffold for the assembly of a functional preinitiation complex with RNA polymerase II and the general transcription factors. This Caenorhabditis elegans protein is Mediator of RNA polymerase II transcription subunit 17 (mdt-17).